The following is a 122-amino-acid chain: Small ribosomal subunit protein uS13 (122 aa).

Residues 98 to 122 form a disordered region; that stretch reads VRGQRTHTNARTRKGPAKAIAGKKK.

This sequence belongs to the universal ribosomal protein uS13 family. Part of the 30S ribosomal subunit. Forms a loose heterodimer with protein S19. Forms two bridges to the 50S subunit in the 70S ribosome.

Its function is as follows. Located at the top of the head of the 30S subunit, it contacts several helices of the 16S rRNA. In the 70S ribosome it contacts the 23S rRNA (bridge B1a) and protein L5 of the 50S subunit (bridge B1b), connecting the 2 subunits; these bridges are implicated in subunit movement. Contacts the tRNAs in the A and P-sites. This Ruegeria pomeroyi (strain ATCC 700808 / DSM 15171 / DSS-3) (Silicibacter pomeroyi) protein is Small ribosomal subunit protein uS13.